The following is a 249-amino-acid chain: uncharacterized protein (249 aa).

It localises to the cytoplasm. The protein localises to the nucleus. This is an uncharacterized protein from Schizosaccharomyces pombe (strain 972 / ATCC 24843) (Fission yeast).